The primary structure comprises 166 residues: CDP-archaeol synthase (166 aa).

A run of 4 helical transmembrane segments spans residues 42–62, 73–93, 104–124, and 128–148; these read FFGGVVSGVLVGLIEIWAATA, FLSVTLLATGALLGDLAKSFL, SWFLADQYDLVVGSFLLILIF, and WLFGTITLPIAVWIVVMTPLL.

It belongs to the CDP-archaeol synthase family. The cofactor is Mg(2+).

The protein resides in the cell membrane. The catalysed reaction is 2,3-bis-O-(geranylgeranyl)-sn-glycerol 1-phosphate + CTP + H(+) = CDP-2,3-bis-O-(geranylgeranyl)-sn-glycerol + diphosphate. Its pathway is membrane lipid metabolism; glycerophospholipid metabolism. In terms of biological role, catalyzes the formation of CDP-2,3-bis-(O-geranylgeranyl)-sn-glycerol (CDP-archaeol) from 2,3-bis-(O-geranylgeranyl)-sn-glycerol 1-phosphate (DGGGP) and CTP. This reaction is the third ether-bond-formation step in the biosynthesis of archaeal membrane lipids. This is CDP-archaeol synthase from Methanoculleus marisnigri (strain ATCC 35101 / DSM 1498 / JR1).